A 473-amino-acid chain; its full sequence is Spliceosome-associated protein CWC27 homolog (473 aa).

An N-acetylserine modification is found at Ser-2. A PPIase cyclophilin-type domain is found at 11–166 (TNGKVLLKTT…NSHKIRSCEV (156 aa)). Over residues 178-193 (EIKKPKKEKPEEEVKK) the composition is skewed to basic and acidic residues. Disordered regions lie at residues 178-197 (EIKK…LKPK), 203-383 (SLLS…TSRE), and 401-473 (IAET…KERR). Residues 206-230 (SFGEEAEEEEEEVNRVSQSMKGKSK) are a coiled coil. The segment covering 231–241 (SSHDLLKDDPH) has biased composition (basic and acidic residues). The Cell attachment site motif lies at 252 to 254 (RGD). The segment covering 256-266 (AEDSDDDGEYE) has biased composition (acidic residues). 2 stretches are compositionally biased toward basic and acidic residues: residues 267–348 (GAEH…KRSE) and 360–372 (EYRR…EALR). Residues 311 to 378 (VSRSEELRKE…EALRKQQAKT (68 aa)) adopt a coiled-coil conformation. A Phosphoserine modification is found at Ser-347. Positions 405-419 (PENDISETEVEDDEG) are enriched in acidic residues. 2 stretches are compositionally biased toward basic and acidic residues: residues 426–438 (QFED…KDAS) and 458–473 (RREE…KERR).

Belongs to the cyclophilin-type PPIase family. As to quaternary structure, part of the activated spliceosome B/catalytic step 1 spliceosome, one of the forms of the spliceosome which has a well-formed active site but still cannot catalyze the branching reaction and is composed at least of 52 proteins, the U2, U5 and U6 snRNAs and the pre-mRNA. Recruited during early steps of activated spliceosome B maturation, it is probably one of the first proteins released from this complex as he matures to the spliceosome C complex. Component of the minor spliceosome, which splices U12-type introns.

Its subcellular location is the nucleus. Functionally, as part of the spliceosome, plays a role in pre-mRNA splicing. Probable inactive PPIase with no peptidyl-prolyl cis-trans isomerase activity. As a component of the minor spliceosome, involved in the splicing of U12-type introns in pre-mRNAs. This Bos taurus (Bovine) protein is Spliceosome-associated protein CWC27 homolog.